Reading from the N-terminus, the 874-residue chain is Alanine--tRNA ligase (874 aa).

Residues His-564, His-568, Cys-665, and His-669 each contribute to the Zn(2+) site.

Belongs to the class-II aminoacyl-tRNA synthetase family. The cofactor is Zn(2+).

It is found in the cytoplasm. The catalysed reaction is tRNA(Ala) + L-alanine + ATP = L-alanyl-tRNA(Ala) + AMP + diphosphate. Its function is as follows. Catalyzes the attachment of alanine to tRNA(Ala) in a two-step reaction: alanine is first activated by ATP to form Ala-AMP and then transferred to the acceptor end of tRNA(Ala). Also edits incorrectly charged Ser-tRNA(Ala) and Gly-tRNA(Ala) via its editing domain. This Burkholderia pseudomallei (strain 668) protein is Alanine--tRNA ligase.